The chain runs to 261 residues: Zinc import ATP-binding protein ZnuC (261 aa).

One can recognise an ABC transporter domain in the interval 5–220 (ISLKALSVTF…PSYIALFGSA (216 aa)). 37–44 (GPNGAGKS) is an ATP binding site. Residues 236–261 (HHDLAGQPVSGDATQCNHHHHGHHHD) form a disordered region. A compositionally biased stretch (basic residues) spans 252-261 (NHHHHGHHHD).

The protein belongs to the ABC transporter superfamily. Zinc importer (TC 3.A.1.15.5) family. The complex is composed of two ATP-binding proteins (ZnuC), two transmembrane proteins (ZnuB) and a solute-binding protein (ZnuA).

Its subcellular location is the cell inner membrane. It carries out the reaction Zn(2+)(out) + ATP(in) + H2O(in) = Zn(2+)(in) + ADP(in) + phosphate(in) + H(+)(in). Functionally, part of the ABC transporter complex ZnuABC involved in zinc import. Responsible for energy coupling to the transport system. This is Zinc import ATP-binding protein ZnuC from Vibrio vulnificus (strain CMCP6).